Here is a 106-residue protein sequence, read N- to C-terminus: Venom family 8-like peptide Pr8a (106 aa).

The signal sequence occupies residues 1–17; sequence MSPIAFLLPFLLQMVLS.

Post-translationally, contains 2 disulfide bonds. As to expression, expressed by the venom gland (anterior main gland) (at protein level).

It localises to the secreted. The sequence is that of Venom family 8-like peptide Pr8a from Platymeris rhadamanthus (Red spot assassin bug).